The following is a 479-amino-acid chain: Probable polyamine transporter At3g19553 (479 aa).

Helical transmembrane passes span 22–42 (LTLL…PFGV), 53–73 (LLAL…EALV), 86–106 (GYVV…EGFW), 130–150 (FPVL…TFSL), 160–180 (IVGF…VVMA), 236–256 (ALFG…MAGT), 275–295 (VGML…AAMS), 304–324 (MSSD…PAFF), 332–352 (TPTI…WMSF), 355–375 (IIEF…AAFV), 395–415 (FGVS…MVLA), and 420–440 (FLIS…LTLV). The segment at 454-479 (RPVSGVSSESQLDEEHGDESAASLLP) is disordered.

Belongs to the amino acid-polyamine-organocation (APC) superfamily. Polyamine:cation symporter (PHS) (TC 2.A.3.12) family.

The protein resides in the cell membrane. Its function is as follows. Probable cell membrane polyamine/proton symporter involved in the polyamine uptake in cells. In Arabidopsis thaliana (Mouse-ear cress), this protein is Probable polyamine transporter At3g19553.